The primary structure comprises 219 residues: Phosphate-specific transport system accessory protein PhoU homolog (219 aa).

This sequence belongs to the PhoU family. As to quaternary structure, homodimer.

The protein resides in the cytoplasm. Its function is as follows. Plays a role in the regulation of phosphate uptake. Encoded together with proteins of the phosphate-specific transport (Pst) system in the polycistronic pstSCAB-phoU operon. The sequence is that of Phosphate-specific transport system accessory protein PhoU homolog from Clostridium acetobutylicum (strain ATCC 824 / DSM 792 / JCM 1419 / IAM 19013 / LMG 5710 / NBRC 13948 / NRRL B-527 / VKM B-1787 / 2291 / W).